The chain runs to 221 residues: 7-cyano-7-deazaguanine synthase (221 aa).

8-18 (LSGGMDSAAVI) is a binding site for ATP. The Zn(2+) site is built by Cys186, Cys196, Cys199, and Cys202.

The protein belongs to the QueC family. Requires Zn(2+) as cofactor.

The catalysed reaction is 7-carboxy-7-deazaguanine + NH4(+) + ATP = 7-cyano-7-deazaguanine + ADP + phosphate + H2O + H(+). It functions in the pathway purine metabolism; 7-cyano-7-deazaguanine biosynthesis. In terms of biological role, catalyzes the ATP-dependent conversion of 7-carboxy-7-deazaguanine (CDG) to 7-cyano-7-deazaguanine (preQ(0)). The chain is 7-cyano-7-deazaguanine synthase from Stenotrophomonas maltophilia (strain K279a).